The following is a 471-amino-acid chain: Argininosuccinate lyase (471 aa).

It belongs to the lyase 1 family. Argininosuccinate lyase subfamily.

The protein resides in the cytoplasm. It carries out the reaction 2-(N(omega)-L-arginino)succinate = fumarate + L-arginine. Its pathway is amino-acid biosynthesis; L-arginine biosynthesis; L-arginine from L-ornithine and carbamoyl phosphate: step 3/3. The chain is Argininosuccinate lyase from Renibacterium salmoninarum (strain ATCC 33209 / DSM 20767 / JCM 11484 / NBRC 15589 / NCIMB 2235).